The chain runs to 96 residues: MSRPKKCRHLSCCVPYSLFKPNGIPSTQLEKIQLEADEFEALNLGDVQKMSQLDAAALMGISRQTFGYLLASARKKVATAVTQGQALLLPQIANKD.

The protein belongs to the UPF0251 family.

This is UPF0251 protein Spea_3639 from Shewanella pealeana (strain ATCC 700345 / ANG-SQ1).